The following is a 332-amino-acid chain: Beta-ketoacyl-[acyl-carrier-protein] synthase III (332 aa).

Residues Cys-112 and His-252 contribute to the active site. Residues 253–257 (QANLR) form an ACP-binding region. Asn-282 is a catalytic residue.

Belongs to the thiolase-like superfamily. FabH family. Homodimer.

Its subcellular location is the cytoplasm. It carries out the reaction malonyl-[ACP] + acetyl-CoA + H(+) = 3-oxobutanoyl-[ACP] + CO2 + CoA. It functions in the pathway lipid metabolism; fatty acid biosynthesis. Its function is as follows. Catalyzes the condensation reaction of fatty acid synthesis by the addition to an acyl acceptor of two carbons from malonyl-ACP. Catalyzes the first condensation reaction which initiates fatty acid synthesis and may therefore play a role in governing the total rate of fatty acid production. Possesses both acetoacetyl-ACP synthase and acetyl transacylase activities. Its substrate specificity determines the biosynthesis of branched-chain and/or straight-chain of fatty acids. This Syntrophomonas wolfei subsp. wolfei (strain DSM 2245B / Goettingen) protein is Beta-ketoacyl-[acyl-carrier-protein] synthase III.